A 356-amino-acid polypeptide reads, in one-letter code: Guanine nucleotide-binding protein alpha-2 subunit (356 aa).

Gly2 carries N-myristoyl glycine lipidation. A lipid anchor (S-palmitoyl cysteine) is attached at Cys4. One can recognise a G-alpha domain in the interval 35 to 356; it reads REVKLLLLGA…LTNNLRDIVL (322 aa). Residues 38-51 are G1 motif; it reads KLLLLGAGESGKST. Residues Glu46, Ser47, Gly48, Lys49, Ser50, Thr51, Asp153, Leu178, Thr184, Gly206, Asn272, Lys273, Asp275, and Ala329 each coordinate GTP. Mg(2+) is bound at residue Ser50. A G2 motif region spans residues 176-184; that stretch reads DILRCRNKT. Thr184 is a binding site for Mg(2+). Residues 199–208 are G3 motif; it reads YRIFDVGGQR. Positions 268–275 are G4 motif; sequence ILFLNKVD. The G5 motif stretch occupies residues 327–332; that stretch reads TNATDV.

It belongs to the G-alpha family. G proteins are composed of 3 units; alpha, beta and gamma. The alpha chain contains the guanine nucleotide binding site. Mg(2+) serves as cofactor.

Guanine nucleotide-binding proteins (G proteins) are involved as modulators or transducers in various transmembrane signaling systems. This chain is Guanine nucleotide-binding protein alpha-2 subunit (GPA2), found in Mycosarcoma maydis (Corn smut fungus).